The primary structure comprises 194 residues: MILSDKDIKKYLEERKLVIHPIDDPQKQIQPSSVDLRLGNSFLHFKVEGRAYIDPTKDNPQDLMEIIEIEEGKPFFLRPGEFVLGTTIETVKLPDDLVARVDGRSSLGRLGIIVHATAGYVDPGFCGQITLELSNINRVPVALYPGMRICQISFYKLTSPAETPYYKKAGSKYHNQKGPTASKLNIDFCVKEDK.

DCTP-binding positions include 104–109, Asp-122, 130–132, Gln-151, Tyr-165, Lys-172, and Gln-176; these read RSSLGR and TLE. Glu-132 serves as the catalytic Proton donor/acceptor.

It belongs to the dCTP deaminase family. As to quaternary structure, homotrimer.

It carries out the reaction dCTP + 2 H2O = dUMP + NH4(+) + diphosphate. It functions in the pathway pyrimidine metabolism; dUMP biosynthesis; dUMP from dCTP: step 1/1. Functionally, bifunctional enzyme that catalyzes both the deamination of dCTP to dUTP and the hydrolysis of dUTP to dUMP without releasing the toxic dUTP intermediate. This Dictyoglomus turgidum (strain DSM 6724 / Z-1310) protein is dCTP deaminase, dUMP-forming.